Here is an 843-residue protein sequence, read N- to C-terminus: Excretory canal abnormal protein 6 (843 aa).

4 disordered regions span residues 54–135 (QLKD…EKKT), 568–601 (TLES…PAKT), 748–767 (TPLS…MTAE), and 773–843 (TMKP…PKWV). Composition is skewed to pro residues over residues 66–76 (TPPPPPPPPPL) and 83–103 (APPP…PPPI). Residues 127–512 (FLPKKEKKTK…KEEKKETQTT (386 aa)) enclose the FH2 domain. Composition is skewed to polar residues over residues 776-792 (PSVS…TSSH) and 819-830 (IPQSPTVTSSAR).

It belongs to the formin homology family. Expressed in the excretory cell and mostly accumulates at the tip of the excretory cell canals.

Its subcellular location is the cytoplasm. The protein resides in the cytoskeleton. Its function is as follows. Constitutively active protein required for microtubule and F-actin growth, structural maintenance and organization during excretory cell tubulogenesis. In Caenorhabditis elegans, this protein is Excretory canal abnormal protein 6.